Reading from the N-terminus, the 353-residue chain is UDP-N-acetylenolpyruvoylglucosamine reductase (353 aa).

Residues 31 to 201 enclose the FAD-binding PCMH-type domain; the sequence is LASHAPAFVA…GSVRFALPRP (171 aa). Arginine 177 is a catalytic residue. Serine 250 serves as the catalytic Proton donor. Glutamate 346 is an active-site residue.

It belongs to the MurB family. Requires FAD as cofactor.

The protein resides in the cytoplasm. The catalysed reaction is UDP-N-acetyl-alpha-D-muramate + NADP(+) = UDP-N-acetyl-3-O-(1-carboxyvinyl)-alpha-D-glucosamine + NADPH + H(+). It functions in the pathway cell wall biogenesis; peptidoglycan biosynthesis. Functionally, cell wall formation. In Bordetella parapertussis (strain 12822 / ATCC BAA-587 / NCTC 13253), this protein is UDP-N-acetylenolpyruvoylglucosamine reductase.